Here is a 178-residue protein sequence, read N- to C-terminus: ATP-dependent protease subunit HslV (178 aa).

Residue Thr-5 is part of the active site. Na(+) is bound by residues Gly-161, Cys-164, and Thr-167.

Belongs to the peptidase T1B family. HslV subfamily. As to quaternary structure, a double ring-shaped homohexamer of HslV is capped on each side by a ring-shaped HslU homohexamer. The assembly of the HslU/HslV complex is dependent on binding of ATP.

Its subcellular location is the cytoplasm. It carries out the reaction ATP-dependent cleavage of peptide bonds with broad specificity.. Allosterically activated by HslU binding. Functionally, protease subunit of a proteasome-like degradation complex believed to be a general protein degrading machinery. The polypeptide is ATP-dependent protease subunit HslV (Nitratiruptor sp. (strain SB155-2)).